We begin with the raw amino-acid sequence, 184 residues long: Cytidylate kinase (184 aa).

An ATP-binding site is contributed by 8–16 (GQPGSGKTT).

This sequence belongs to the cytidylate kinase family. Type 2 subfamily.

The protein resides in the cytoplasm. The enzyme catalyses CMP + ATP = CDP + ADP. It carries out the reaction dCMP + ATP = dCDP + ADP. The chain is Cytidylate kinase from Pyrobaculum neutrophilum (strain DSM 2338 / JCM 9278 / NBRC 100436 / V24Sta) (Thermoproteus neutrophilus).